We begin with the raw amino-acid sequence, 255 residues long: MTNWATLWPNDRLFLSDTYQLIWFDIEADRIEHKHFKAQNSEDISMIPKGFVSFVDNRLPMCINHKGEVYIRVGSFDTAYYQKFGDLDVSDFDDQVLPPDRDFTFNKVVFGDVPQEQLDNQIRDLQSEVSILTSRNVEMNVRENDLLKKVSELEKQIRQSSHNYEKVVEDGVVLSYRKAGGLLNRMVVLNRRLVGQRFVTNQRRWENIIMGSGVHDGSSYMAFNFKESGGSLKVTFDFDKLQNLSPDDLLAMQIA.

It belongs to the tobravirus protein 2b family.

The protein resides in the virion. In terms of biological role, may function by interacting with a small, flexible domain located at the C-terminus of the CP, forming a bridge between the virus particle and the internal surface of the vector nematode feeding apparatus. The chain is Protein 2b from Phaseolus vulgaris (Kidney bean).